The following is an 81-amino-acid chain: Antitoxin VapB20 (81 aa).

Its function is as follows. Antitoxin component of a type II toxin-antitoxin (TA) system. Neutralizes the toxic effect of cognate toxin VapC20. The protein is Antitoxin VapB20 (vapB20) of Mycobacterium tuberculosis (strain CDC 1551 / Oshkosh).